The chain runs to 352 residues: Guanine nucleotide-binding protein alpha-7 subunit (352 aa).

Gly2 carries N-myristoyl glycine lipidation. Residue Cys4 is the site of S-palmitoyl cysteine attachment. A G-alpha domain is found at 32–352 (RIIKLLLLGA…AKNLKSMGLC (321 aa)). Residues 35–48 (KLLLLGAGESGKST) form a G1 motif region. GTP-binding positions include 40-47 (GAGESGKS), 174-180 (LRTRIKT), 199-203 (DVGGQ), 268-271 (NKKD), and Ala324. Positions 47 and 180 each coordinate Mg(2+). The segment at 172-180 (DLLRTRIKT) is G2 motif. Positions 195 to 204 (FRVIDVGGQR) are G3 motif. The tract at residues 264 to 271 (ILFLNKKD) is G4 motif. The G5 motif stretch occupies residues 322-327 (TCATDT).

Belongs to the G-alpha family. G(i/o/t/z) subfamily. In terms of assembly, g proteins are composed of 3 units; alpha, beta and gamma. The alpha chain contains the guanine nucleotide binding site.

Its function is as follows. Guanine nucleotide-binding proteins (G proteins) are involved as modulators or transducers in various transmembrane signaling systems. The sequence is that of Guanine nucleotide-binding protein alpha-7 subunit (gpa-7) from Caenorhabditis briggsae.